The chain runs to 32 residues: Dermatoxin-J2 (32 aa).

A Glutamine amide modification is found at glutamine 32.

As to expression, expressed by the skin glands.

It is found in the secreted. Functionally, antimicrobial peptide. This Phasmahyla jandaia (Jandaia leaf frog) protein is Dermatoxin-J2.